We begin with the raw amino-acid sequence, 59 residues long: Protein translocase subunit SecE (59 aa).

A helical transmembrane segment spans residues 37-57; the sequence is GIGIIIIGVIGFIISIIAQLL.

It belongs to the SecE/SEC61-gamma family. As to quaternary structure, component of the Sec protein translocase complex. Heterotrimer consisting of SecY (alpha), SecG (beta) and SecE (gamma) subunits. The heterotrimers can form oligomers, although 1 heterotrimer is thought to be able to translocate proteins. Interacts with the ribosome. May interact with SecDF, and other proteins may be involved.

It localises to the cell membrane. Functionally, essential subunit of the Sec protein translocation channel SecYEG. Clamps together the 2 halves of SecY. May contact the channel plug during translocation. In Methanothermobacter thermautotrophicus (strain ATCC 29096 / DSM 1053 / JCM 10044 / NBRC 100330 / Delta H) (Methanobacterium thermoautotrophicum), this protein is Protein translocase subunit SecE.